A 459-amino-acid chain; its full sequence is Diaminopimelate decarboxylase (459 aa).

Residue K89 is modified to N6-(pyridoxal phosphate)lysine. Residues G271 and 313 to 316 (EPGR) contribute to the pyridoxal 5'-phosphate site. 3 residues coordinate substrate: R316, R357, and Y361. C388 functions as the Proton donor in the catalytic mechanism. E389 and Y418 together coordinate substrate. Y418 contacts pyridoxal 5'-phosphate.

This sequence belongs to the Orn/Lys/Arg decarboxylase class-II family. LysA subfamily. As to quaternary structure, homodimer. Pyridoxal 5'-phosphate serves as cofactor.

The enzyme catalyses meso-2,6-diaminopimelate + H(+) = L-lysine + CO2. The protein operates within amino-acid biosynthesis; L-lysine biosynthesis via DAP pathway; L-lysine from DL-2,6-diaminopimelate: step 1/1. Specifically catalyzes the decarboxylation of meso-diaminopimelate (meso-DAP) to L-lysine. The chain is Diaminopimelate decarboxylase from Corynebacterium efficiens (strain DSM 44549 / YS-314 / AJ 12310 / JCM 11189 / NBRC 100395).